The chain runs to 104 residues: ATP-dependent Clp protease adapter protein ClpS (104 aa).

Belongs to the ClpS family. As to quaternary structure, binds to the N-terminal domain of the chaperone ClpA.

In terms of biological role, involved in the modulation of the specificity of the ClpAP-mediated ATP-dependent protein degradation. The chain is ATP-dependent Clp protease adapter protein ClpS from Paraburkholderia phymatum (strain DSM 17167 / CIP 108236 / LMG 21445 / STM815) (Burkholderia phymatum).